The primary structure comprises 184 residues: Large ribosomal subunit protein uL5 (184 aa).

It belongs to the universal ribosomal protein uL5 family. As to quaternary structure, part of the 50S ribosomal subunit; part of the 5S rRNA/L5/L18/L25 subcomplex. Contacts the 5S rRNA and the P site tRNA. Forms a bridge to the 30S subunit in the 70S ribosome.

This is one of the proteins that bind and probably mediate the attachment of the 5S RNA into the large ribosomal subunit, where it forms part of the central protuberance. In the 70S ribosome it contacts protein S13 of the 30S subunit (bridge B1b), connecting the 2 subunits; this bridge is implicated in subunit movement. Contacts the P site tRNA; the 5S rRNA and some of its associated proteins might help stabilize positioning of ribosome-bound tRNAs. The chain is Large ribosomal subunit protein uL5 from Thermotoga maritima (strain ATCC 43589 / DSM 3109 / JCM 10099 / NBRC 100826 / MSB8).